Here is a 503-residue protein sequence, read N- to C-terminus: Anhydrotetracycline monooxygenase (503 aa).

The protein belongs to the PheA/TfdB FAD monooxygenase family. FAD is required as a cofactor.

The catalysed reaction is anhydrotetracycline + NADPH + O2 + H(+) = 5a,11a-dehydrotetracycline + NADP(+) + H2O. It functions in the pathway antibiotic biosynthesis; oxytetracycline biosynthesis. Its function is as follows. Catalyzes hydroxylation of the anthracycline structure at position C-6 during the biosynthesis of oxytetracyline. This is Anhydrotetracycline monooxygenase from Streptomyces rimosus.